A 378-amino-acid chain; its full sequence is MALARDPTGAEIARFIATRTGAQMVQLMRCIKEPAAQAAFTAKLLVAPPAMSGRPATPEKARKALNAFVGFRCYYITIPMFKPWPMKKLSNLIGLLWEADPNKSLWSLMAKPWSTIRDQIGKDQAPLDQFFRIICPHLKLPDPASYLEIHGWTLAVNEEGDPIISRSADSEFASVGTGNTDMAISVEDIITYGQSLGYAHGFILDNKPSSTFLGQSVSSTLEKNISAISITEGTSKAAHARFLIRNKRRAKRQTLRNAGYRASLDQDILNGHQLDPAPVDENMPDCYSTTAPVLDQSPNKFYGGLTTLLSDQISTGQGDADHLDNAYLFNDCSLSGNAPFMTIAGFTTNMPNLTDYGAFRLGADEDVTLPIFDDITHI.

The alpha box DNA-binding region spans 60–117 (KARKALNAFVGFRCYYITIPMFKPWPMKKLSNLIGLLWEADPNKSLWSLMAKPWSTIR).

This sequence belongs to the MATALPHA1 family.

The protein resides in the nucleus. In terms of biological role, mating type proteins are sequence specific DNA-binding proteins that act as master switches in fungal differentiation by controlling gene expression in a cell type-specific fashion. Transcriptional activator that induces the transcription of alpha-specific genes. In Cochliobolus sativus (Common root rot and spot blotch fungus), this protein is Mating-type protein MAT-1 (MAT1).